Here is a 353-residue protein sequence, read N- to C-terminus: Guanine nucleotide-binding protein subunit alpha (353 aa).

The N-myristoyl glycine moiety is linked to residue glycine 2. Residue cysteine 3 is the site of S-palmitoyl cysteine attachment. Positions 33–353 (NEIKMLLLGA…QLHLRECGLL (321 aa)) constitute a G-alpha domain. A G1 motif region spans residues 36 to 49 (KMLLLGAGESGKST). The GTP site is built by glutamate 44, serine 45, glycine 46, lysine 47, serine 48, threonine 49, aspartate 150, leucine 175, threonine 181, glycine 203, asparagine 269, lysine 270, aspartate 272, and alanine 325. Serine 48 lines the Mg(2+) pocket. The segment at 173–181 (DILRSRVKT) is G2 motif. Threonine 181 contributes to the Mg(2+) binding site. Positions 196–205 (YKLFDVGGQR) are G3 motif. A G4 motif region spans residues 265 to 272 (ILFLNKID). The segment at 323-328 (TCATDT) is G5 motif.

Belongs to the G-alpha family. G(q) subfamily. As to quaternary structure, g proteins are composed of 3 units; alpha, beta and gamma. The alpha chain contains the guanine nucleotide binding site. It depends on Mg(2+) as a cofactor.

Functionally, guanine nucleotide-binding proteins (G proteins) are involved as modulators or transducers in various transmembrane signaling systems. The polypeptide is Guanine nucleotide-binding protein subunit alpha (CGP1) (Coprinellus congregatus (Inky cap fungus)).